The chain runs to 156 residues: Small ribosomal subunit protein uS7 (156 aa).

The protein belongs to the universal ribosomal protein uS7 family. As to quaternary structure, part of the 30S ribosomal subunit. Contacts proteins S9 and S11.

Its function is as follows. One of the primary rRNA binding proteins, it binds directly to 16S rRNA where it nucleates assembly of the head domain of the 30S subunit. Is located at the subunit interface close to the decoding center, probably blocks exit of the E-site tRNA. This chain is Small ribosomal subunit protein uS7, found in Pectobacterium atrosepticum (strain SCRI 1043 / ATCC BAA-672) (Erwinia carotovora subsp. atroseptica).